Consider the following 144-residue polypeptide: Large ribosomal subunit protein uL16 (144 aa).

Residues 1–16 (MLTPKRVKHRKQHRGK) are compositionally biased toward basic residues. Residues 1–22 (MLTPKRVKHRKQHRGKMAGNAK) form a disordered region.

Belongs to the universal ribosomal protein uL16 family. As to quaternary structure, part of the 50S ribosomal subunit.

Its function is as follows. Binds 23S rRNA and is also seen to make contacts with the A and possibly P site tRNAs. This is Large ribosomal subunit protein uL16 from Brevibacillus brevis (strain 47 / JCM 6285 / NBRC 100599).